Reading from the N-terminus, the 235-residue chain is 2-C-methyl-D-erythritol 4-phosphate cytidylyltransferase (235 aa).

The protein belongs to the IspD/TarI cytidylyltransferase family. IspD subfamily.

The enzyme catalyses 2-C-methyl-D-erythritol 4-phosphate + CTP + H(+) = 4-CDP-2-C-methyl-D-erythritol + diphosphate. It participates in isoprenoid biosynthesis; isopentenyl diphosphate biosynthesis via DXP pathway; isopentenyl diphosphate from 1-deoxy-D-xylulose 5-phosphate: step 2/6. Functionally, catalyzes the formation of 4-diphosphocytidyl-2-C-methyl-D-erythritol from CTP and 2-C-methyl-D-erythritol 4-phosphate (MEP). The sequence is that of 2-C-methyl-D-erythritol 4-phosphate cytidylyltransferase from Leptospira borgpetersenii serovar Hardjo-bovis (strain L550).